A 394-amino-acid chain; its full sequence is Acetyl-CoA acetyltransferase (394 aa).

The active-site Acyl-thioester intermediate is C89. Active-site proton acceptor residues include H350 and C380.

It belongs to the thiolase-like superfamily. Thiolase family. As to quaternary structure, homotetramer.

It is found in the cytoplasm. It carries out the reaction 2 acetyl-CoA = acetoacetyl-CoA + CoA. Its pathway is biopolymer metabolism; poly-(R)-3-hydroxybutanoate biosynthesis. It participates in metabolic intermediate biosynthesis; (R)-mevalonate biosynthesis; (R)-mevalonate from acetyl-CoA: step 1/3. The polypeptide is Acetyl-CoA acetyltransferase (Thiocystis violacea).